Here is a 612-residue protein sequence, read N- to C-terminus: Heparan-sulfate 6-O-sulfotransferase 2 (612 aa).

Residues 1 to 4 (MALP) lie on the Cytoplasmic side of the membrane. Residues 5–27 (AFAARALGPPLQPEQGAPARTTC) traverse the membrane as a helical; Signal-anchor for type II membrane protein segment. Positions 9–52 (RALGPPLQPEQGAPARTTCPRRHSRVEAELAASRPGSVAASVRA) are disordered. Topologically, residues 28–612 (PRRHSRVEAE…DYIGSVETWR (585 aa)) are lumenal. The N-linked (GlcNAc...) asparagine glycan is linked to Asn-209. 233–241 (HIQKTGGTT) contributes to the 3'-phosphoadenylyl sulfate binding site. Substrate is bound by residues 263–264 (KK), Arg-280, Trp-285, and His-290. His-290 acts as the Proton acceptor in catalysis. 2 residues coordinate 3'-phosphoadenylyl sulfate: Arg-325 and Ser-333. Substrate-binding residues include His-337 and Trp-344. N-linked (GlcNAc...) asparagine glycosylation occurs at Asn-404. Residue 457–459 (TQY) participates in 3'-phosphoadenylyl sulfate binding. N-linked (GlcNAc...) asparagine glycosylation is present at Asn-460. 463–464 (RA) contacts 3'-phosphoadenylyl sulfate. The segment at 529-612 (HFQSQSQGQS…DYIGSVETWR (84 aa)) is disordered. The span at 531 to 564 (QSQSQGQSQSQSPGQNLSQNPNPNPNQNLTQNLS) shows a compositional bias: low complexity. N-linked (GlcNAc...) asparagine glycans are attached at residues Asn-546, Asn-558, Asn-562, Asn-574, and Asn-599. Residues 565–577 (HNLTPSSNPNSTQ) show a composition bias toward polar residues.

The protein belongs to the sulfotransferase 6 family.

It is found in the membrane. It carries out the reaction alpha-D-glucosaminyl-[heparan sulfate](n) + 3'-phosphoadenylyl sulfate = 6-sulfo-alpha-D-glucosaminyl-[heparan sulfate](n) + adenosine 3',5'-bisphosphate + H(+). Functionally, 6-O-sulfation enzyme which catalyzes the transfer of sulfate from 3'-phosphoadenosine 5'-phosphosulfate (PAPS) to position 6 of the N-sulfoglucosamine residue (GlcNS) of heparan sulfate. In Mus musculus (Mouse), this protein is Heparan-sulfate 6-O-sulfotransferase 2 (Hs6st2).